We begin with the raw amino-acid sequence, 413 residues long: Multifunctional CCA protein (413 aa).

Residues Gly8 and Arg11 each coordinate ATP. CTP contacts are provided by Gly8 and Arg11. Asp21 and Asp23 together coordinate Mg(2+). Residues Arg91, Arg137, and Arg140 each coordinate ATP. The CTP site is built by Arg91, Arg137, and Arg140. An HD domain is found at 228–329 (TGVHTLMTLS…VKLFDAIDAW (102 aa)).

The protein belongs to the tRNA nucleotidyltransferase/poly(A) polymerase family. Bacterial CCA-adding enzyme type 1 subfamily. As to quaternary structure, monomer. Can also form homodimers and oligomers. The cofactor is Mg(2+). Ni(2+) serves as cofactor.

The enzyme catalyses a tRNA precursor + 2 CTP + ATP = a tRNA with a 3' CCA end + 3 diphosphate. The catalysed reaction is a tRNA with a 3' CCA end + 2 CTP + ATP = a tRNA with a 3' CCACCA end + 3 diphosphate. Catalyzes the addition and repair of the essential 3'-terminal CCA sequence in tRNAs without using a nucleic acid template. Adds these three nucleotides in the order of C, C, and A to the tRNA nucleotide-73, using CTP and ATP as substrates and producing inorganic pyrophosphate. tRNA 3'-terminal CCA addition is required both for tRNA processing and repair. Also involved in tRNA surveillance by mediating tandem CCA addition to generate a CCACCA at the 3' terminus of unstable tRNAs. While stable tRNAs receive only 3'-terminal CCA, unstable tRNAs are marked with CCACCA and rapidly degraded. This chain is Multifunctional CCA protein, found in Salmonella schwarzengrund (strain CVM19633).